The following is a 339-amino-acid chain: UDP-3-O-acylglucosamine N-acyltransferase (339 aa).

The active-site Proton acceptor is the His-248.

Belongs to the transferase hexapeptide repeat family. LpxD subfamily. In terms of assembly, homotrimer.

It carries out the reaction a UDP-3-O-[(3R)-3-hydroxyacyl]-alpha-D-glucosamine + a (3R)-hydroxyacyl-[ACP] = a UDP-2-N,3-O-bis[(3R)-3-hydroxyacyl]-alpha-D-glucosamine + holo-[ACP] + H(+). It functions in the pathway bacterial outer membrane biogenesis; LPS lipid A biosynthesis. In terms of biological role, catalyzes the N-acylation of UDP-3-O-acylglucosamine using 3-hydroxyacyl-ACP as the acyl donor. Is involved in the biosynthesis of lipid A, a phosphorylated glycolipid that anchors the lipopolysaccharide to the outer membrane of the cell. The sequence is that of UDP-3-O-acylglucosamine N-acyltransferase from Caulobacter vibrioides (strain NA1000 / CB15N) (Caulobacter crescentus).